Reading from the N-terminus, the 644-residue chain is Exoribonuclease 2 (644 aa).

The RNB domain occupies 189–516 (RQDLTALNFV…NHRLLKAVIK (328 aa)). One can recognise an S1 motif domain in the interval 561-643 (NTRFAAEIID…ETRSIIARPA (83 aa)).

It belongs to the RNR ribonuclease family. RNase II subfamily.

Its subcellular location is the cytoplasm. It catalyses the reaction Exonucleolytic cleavage in the 3'- to 5'-direction to yield nucleoside 5'-phosphates.. In terms of biological role, involved in mRNA degradation. Hydrolyzes single-stranded polyribonucleotides processively in the 3' to 5' direction. The chain is Exoribonuclease 2 from Salmonella typhi.